Here is a 390-residue protein sequence, read N- to C-terminus: Endonuclease 8-like 1 (390 aa).

The active-site Schiff-base intermediate with DNA is Pro-2. Glu-3 serves as the catalytic Proton donor. The Proton donor; for beta-elimination activity role is filled by Lys-54. Asn-176 contacts DNA. The disordered stretch occupies residues 278–390; sequence TIWFQGDPGP…SLEPEGTSAS (113 aa). The span at 291-301 shows a compositional bias: basic residues; sequence KGRKSRKKKSK. Residues 335–347 show a composition bias toward polar residues; sequence TATQRPEGTSLQQ. Arg-339 is a binding site for DNA. Arg-339 acts as the Proton donor; for delta-elimination activity in catalysis.

Belongs to the FPG family. In terms of tissue distribution, ubiquitous.

It is found in the cytoplasm. It localises to the cytoskeleton. The protein localises to the microtubule organizing center. Its subcellular location is the centrosome. The protein resides in the nucleus. It is found in the chromosome. It carries out the reaction 2'-deoxyribonucleotide-(2'-deoxyribose 5'-phosphate)-2'-deoxyribonucleotide-DNA = a 3'-end 2'-deoxyribonucleotide-(2,3-dehydro-2,3-deoxyribose 5'-phosphate)-DNA + a 5'-end 5'-phospho-2'-deoxyribonucleoside-DNA + H(+). Its function is as follows. Involved in base excision repair of DNA damaged by oxidation or by mutagenic agents. Acts as a DNA glycosylase that recognizes and removes damaged bases. Has a preference for oxidized pyrimidines, such as thymine glycol, formamidopyrimidine (Fapy) and 5-hydroxyuracil. Has marginal activity towards 8-oxoguanine. Has AP (apurinic/apyrimidinic) lyase activity and introduces nicks in the DNA strand. Cleaves the DNA backbone by beta-delta elimination to generate a single-strand break at the site of the removed base with both 3'- and 5'-phosphates. Has DNA glycosylase/lyase activity towards mismatched uracil and thymine, in particular in U:C and T:C mismatches. Specifically binds 5-hydroxymethylcytosine (5hmC), suggesting that it acts as a specific reader of 5hmC. The sequence is that of Endonuclease 8-like 1 (NEIL1) from Homo sapiens (Human).